The following is a 470-amino-acid chain: 6-phosphofructo-2-kinase/fructose-2,6-bisphosphatase (470 aa).

Residues 1 to 249 (MADRLRELTQ…VYYLMNIHVT (249 aa)) are 6-phosphofructo-2-kinase. Ser-31 carries the phosphoserine; by PKA modification. 47–55 (GLPARGKTY) provides a ligand contact to ATP. Beta-D-fructose 6-phosphate contacts are provided by Arg-80 and Arg-104. Asp-130 is an active-site residue. Beta-D-fructose 6-phosphate contacts are provided by Thr-132 and Arg-138. Cys-160 is a catalytic residue. 169-174 (NITQVK) provides a ligand contact to ATP. Positions 174, 195, and 199 each coordinate beta-D-fructose 6-phosphate. The tract at residues 250-470 (PRSIYLSRHG…EALDTVPEHF (221 aa)) is fructose-2,6-bisphosphatase. Position 257 (Arg-257) interacts with beta-D-fructose 2,6-bisphosphate. His-258 functions as the Tele-phosphohistidine intermediate in the catalytic mechanism. Beta-D-fructose 2,6-bisphosphate is bound by residues Asn-264 and Gly-270. Catalysis depends on Glu-327, which acts as the Proton donor/acceptor. Tyr-338, Arg-352, Lys-356, Tyr-367, Gln-393, and Arg-397 together coordinate beta-D-fructose 2,6-bisphosphate. 349–352 (FALR) is a binding site for ATP. ATP-binding positions include 393-397 (QAVMR) and Tyr-429.

This sequence in the C-terminal section; belongs to the phosphoglycerate mutase family. Homodimer.

The catalysed reaction is beta-D-fructose 2,6-bisphosphate + H2O = beta-D-fructose 6-phosphate + phosphate. It catalyses the reaction beta-D-fructose 6-phosphate + ATP = beta-D-fructose 2,6-bisphosphate + ADP + H(+). Its activity is regulated as follows. Phosphorylation results in inhibition of the kinase activity. Synthesis and degradation of fructose 2,6-bisphosphate. The polypeptide is 6-phosphofructo-2-kinase/fructose-2,6-bisphosphatase (Aquarana catesbeiana (American bullfrog)).